The primary structure comprises 1131 residues: MNASPHSKPSAALAPSPTAAFFPSTSRVYTSKAATVVDDDEALDEIRRYESFSTVDWVVDNTRERNRLARERQAASAHFVSSSSNAHLGNADAAWGHIGFGRGGVPPRWWSRGPWGRRAWLVWGIVKSASSAFTDSGVIVLVGILIGLNMGVISLATEWASDLKQGYCSSGWWLNQKFCCWEMMDQAGPGGAPLPAAAKALATATVTVTASIGAAAAATDSAPILPATPAATPTAAIRAVAQEAYNLTIRAIPDHQLWSRSAQDVIQDGFGTGLRLLSRAEGAASGAGDLSETCTDWVRWSKWSFPAWIIYMLFAGLLSFICAHLVKSFAPYAAGSGISEIKCILAGFVINGYLGFWTLAIKSLTLPLAIASGLSVGKEGPAVHVACCIGNVVASFFRSFNRSQAKMRELLTASSAAGVAVAFGSPIGGVLFSLEEMAYNFPASTMWRSFLCALAATVTLSFMNPFRTGKLVLFQVSYDRDWHYFEIMFYILIGIFGGLYGAFVIKYNLQVQSFRRSYLVKHGVSEVVVLATLTAFVGYANKFLRIDMTESLEILFRECEGGGDYDNLCQSWAQWRMVNSLLLATVLRTALVIVSYGCKVPAGIFVPSMAIGATFGRMVGILVKALYNAFPHWSLFSACQPDVPCITPGTYAFLGAAAALAGVTRITVAVVVIMFELTGALTYILPTMIVVGITKGVADWFSRGGIAEQMIKFSGYPFLDKDDHNFGIPVADVMRVCPQVLFASGMKLSELEGKLADGSYKGFPLVLAKHDATLLGYVGKVELRYAIGKARRARALDGDTLCLFSVGPNALDRADGVESSAHGAQQQQPDLLSVASLPTTAAADRAVREDMLSRFSGATGAGSASGLGSTSATGVASQRRHESESLIGQLDVEDDRSSAPSYRSRVDAGDNMSSSSDDDAVVGNAGGGVDGESDLDKLELGGWIDPTPLIVQPGMPLETVMDMFKNLGPRVILVVEYGRLSGLVTVKDVLKRIAMQEKAEAAARTAAAAGLPMSGSANSFTGEGAGAGGGELEALLKEAYEWAQEKWALISPRIERISARRASASRGGAPGSQAGQARYSHLRESTEDRYDDSDAVAEDMPMHSTRQTSATKNTRSEHHQFVLGAQDDDDE.

12 helical membrane passes run 137–157 (GVIV…SLAT), 206–226 (VTVT…PILP), 305–325 (FPAW…CAHL), 341–361 (IKCI…TLAI), 380–397 (GPAV…ASFF), 414–434 (SSAA…LFSL), 485–505 (FEIM…AFVI), 518–538 (YLVK…AFVG), 577–597 (MVNS…VSYG), 603–623 (GIFV…GILV), 643–663 (VPCI…LAGV), and 680–702 (ALTY…DWFS). 2 disordered regions span residues 815-835 (DGVE…LSVA) and 858-928 (ATGA…AGGG). A compositionally biased stretch (low complexity) spans 866 to 877 (GLGSTSATGVAS). In terms of domain architecture, CBS spans 944-1000 (IDPTPLIVQPGMPLETVMDMFKNLGPRVILVVEYGRLSGLVTVKDVLKRIAMQEKAE). The segment covering 1061-1078 (RASASRGGAPGSQAGQAR) has biased composition (low complexity). The disordered stretch occupies residues 1061 to 1131 (RASASRGGAP…VLGAQDDDDE (71 aa)). The segment covering 1104 to 1113 (STRQTSATKN) has biased composition (polar residues).

It belongs to the chloride channel (TC 2.A.49) family.

It localises to the membrane. In terms of biological role, voltage-gated chloride channel. This Mycosarcoma maydis (Corn smut fungus) protein is Probable chloride channel protein UM03490-D.